The following is a 555-amino-acid chain: Urocanate hydratase (555 aa).

NAD(+) is bound by residues 52-53, Q130, 176-178, E196, R201, 242-243, 263-267, 273-274, and Y322; these read GG, GMG, NA, QTSAH, and YL. The active site involves C410. G492 contacts NAD(+).

The protein belongs to the urocanase family. The cofactor is NAD(+).

The protein localises to the cytoplasm. The enzyme catalyses 4-imidazolone-5-propanoate = trans-urocanate + H2O. Its pathway is amino-acid degradation; L-histidine degradation into L-glutamate; N-formimidoyl-L-glutamate from L-histidine: step 2/3. In terms of biological role, catalyzes the conversion of urocanate to 4-imidazolone-5-propionate. The protein is Urocanate hydratase of Shewanella baltica (strain OS223).